The sequence spans 153 residues: Bursicon (153 aa).

A signal peptide spans 1–22 (MLLYHIVGASVLICLLNETAKA). Cystine bridges form between Cys-29-Cys-78, Cys-43-Cys-92, Cys-53-Cys-113, Cys-57-Cys-115, and Cys-75-Cys-118. The CTCK domain maps to 29 to 119 (CQATPVIHFL…PLECMCRPCT (91 aa)).

Heterodimer of burs and pburs.

Its subcellular location is the secreted. Its function is as follows. Final heterodimeric neurohormone released at the end of the molting cycle, involved in the sclerotization (tanning) of the insect cuticle, melanization and wing spreading. This chain is Bursicon, found in Apis mellifera (Honeybee).